Here is a 175-residue protein sequence, read N- to C-terminus: Peptide deformylase (175 aa).

Fe cation is bound by residues cysteine 98 and histidine 140. Glutamate 141 is an active-site residue. A Fe cation-binding site is contributed by histidine 144.

The protein belongs to the polypeptide deformylase family. Requires Fe(2+) as cofactor.

It carries out the reaction N-terminal N-formyl-L-methionyl-[peptide] + H2O = N-terminal L-methionyl-[peptide] + formate. Its function is as follows. Removes the formyl group from the N-terminal Met of newly synthesized proteins. Requires at least a dipeptide for an efficient rate of reaction. N-terminal L-methionine is a prerequisite for activity but the enzyme has broad specificity at other positions. The sequence is that of Peptide deformylase from Nitrobacter hamburgensis (strain DSM 10229 / NCIMB 13809 / X14).